Reading from the N-terminus, the 324-residue chain is Beta-ketoacyl-[acyl-carrier-protein] synthase III (324 aa).

Catalysis depends on residues Cys114 and His246. Positions 247–251 are ACP-binding; the sequence is QANLR. Residue Asn276 is part of the active site.

This sequence belongs to the thiolase-like superfamily. FabH family. As to quaternary structure, homodimer.

Its subcellular location is the cytoplasm. The enzyme catalyses malonyl-[ACP] + acetyl-CoA + H(+) = 3-oxobutanoyl-[ACP] + CO2 + CoA. Its pathway is lipid metabolism; fatty acid biosynthesis. Catalyzes the condensation reaction of fatty acid synthesis by the addition to an acyl acceptor of two carbons from malonyl-ACP. Catalyzes the first condensation reaction which initiates fatty acid synthesis and may therefore play a role in governing the total rate of fatty acid production. Possesses both acetoacetyl-ACP synthase and acetyl transacylase activities. Its substrate specificity determines the biosynthesis of branched-chain and/or straight-chain of fatty acids. The polypeptide is Beta-ketoacyl-[acyl-carrier-protein] synthase III (Campylobacter jejuni (strain RM1221)).